The chain runs to 393 residues: S-adenosylmethionine synthase 1 (393 aa).

Glu9 contributes to the Mg(2+) binding site. His15 contacts ATP. Glu43 is a K(+) binding site. 2 residues coordinate L-methionine: Glu56 and Gln99. ATP contacts are provided by residues 167-169 (DGK), 235-238 (SGRF), Asp246, 252-253 (RK), Ala269, Lys273, and Lys277. Asp246 contributes to the L-methionine binding site. Lys277 contributes to the L-methionine binding site.

It belongs to the AdoMet synthase family. As to quaternary structure, homotetramer. It depends on Mn(2+) as a cofactor. Requires Mg(2+) as cofactor. Co(2+) is required as a cofactor. The cofactor is K(+).

It localises to the cytoplasm. It catalyses the reaction L-methionine + ATP + H2O = S-adenosyl-L-methionine + phosphate + diphosphate. It functions in the pathway amino-acid biosynthesis; S-adenosyl-L-methionine biosynthesis; S-adenosyl-L-methionine from L-methionine: step 1/1. Functionally, catalyzes the formation of S-adenosylmethionine from methionine and ATP. The reaction comprises two steps that are both catalyzed by the same enzyme: formation of S-adenosylmethionine (AdoMet) and triphosphate, and subsequent hydrolysis of the triphosphate. This chain is S-adenosylmethionine synthase 1 (METK1), found in Picea sitchensis (Sitka spruce).